Consider the following 667-residue polypeptide: UvrABC system protein B (667 aa).

Residues 25–414 (TGLQRGDKHQ…GVVVEQIIRP (390 aa)) enclose the Helicase ATP-binding domain. 38-45 (GVTGSGKT) serves as a coordination point for ATP. The Beta-hairpin motif lies at 91–114 (YYDYYQPEAYVPTTDTFIEKDSSI). The Helicase C-terminal domain occupies 430 to 596 (QVDDLIHEIR…TVKKSLRSIL (167 aa)). The 36-residue stretch at 624 to 659 (KNEIARVKEEMLAAAANLEFEKAAELRDRMLELDKL) folds into the UVR domain.

Belongs to the UvrB family. As to quaternary structure, forms a heterotetramer with UvrA during the search for lesions. Interacts with UvrC in an incision complex.

The protein resides in the cytoplasm. Functionally, the UvrABC repair system catalyzes the recognition and processing of DNA lesions. A damage recognition complex composed of 2 UvrA and 2 UvrB subunits scans DNA for abnormalities. Upon binding of the UvrA(2)B(2) complex to a putative damaged site, the DNA wraps around one UvrB monomer. DNA wrap is dependent on ATP binding by UvrB and probably causes local melting of the DNA helix, facilitating insertion of UvrB beta-hairpin between the DNA strands. Then UvrB probes one DNA strand for the presence of a lesion. If a lesion is found the UvrA subunits dissociate and the UvrB-DNA preincision complex is formed. This complex is subsequently bound by UvrC and the second UvrB is released. If no lesion is found, the DNA wraps around the other UvrB subunit that will check the other stand for damage. The sequence is that of UvrABC system protein B from Syntrophotalea carbinolica (strain DSM 2380 / NBRC 103641 / GraBd1) (Pelobacter carbinolicus).